Here is a 91-residue protein sequence, read N- to C-terminus: Chorion class B protein M3A5 (91 aa).

Positions 1–51 (VASENRYEGTVGVSGNLPFLGTADVAGEFPTAGIGEILYGCGNGAVGITRE) are central domain. The tract at residues 52-91 (GGLGYGAGYGGGYGLGYGGYGGGYGLGYGGYGGCGCGCGY) is right arm (Gly-rich tandem repeats).

Belongs to the chorion protein family.

Its function is as follows. This protein is one of many from the eggshell of the silk moth. The protein is Chorion class B protein M3A5 of Bombyx mori (Silk moth).